A 134-amino-acid chain; its full sequence is Mediator of RNA polymerase II transcription subunit 10 (134 aa).

The protein belongs to the Mediator complex subunit 10 family. In terms of assembly, component of the Mediator complex.

Its subcellular location is the nucleus. Functionally, component of the Mediator complex, a coactivator involved in the regulated transcription of nearly all RNA polymerase II-dependent genes. Mediator functions as a bridge to convey information from gene-specific regulatory proteins to the basal RNA polymerase II transcription machinery. Mediator is recruited to promoters by direct interactions with regulatory proteins and serves as a scaffold for the assembly of a functional preinitiation complex with RNA polymerase II and the general transcription factors. Negatively regulates the Wnt signaling pathway and positively regulates the Nodal signaling pathway. Required for cardiac cushion formation. The protein is Mediator of RNA polymerase II transcription subunit 10 (med10) of Danio rerio (Zebrafish).